Here is a 173-residue protein sequence, read N- to C-terminus: Crossover junction endodeoxyribonuclease RuvC (173 aa).

Active-site residues include Asp8, Glu67, and Asp139. Mg(2+)-binding residues include Asp8, Glu67, and Asp139.

This sequence belongs to the RuvC family. In terms of assembly, homodimer which binds Holliday junction (HJ) DNA. The HJ becomes 2-fold symmetrical on binding to RuvC with unstacked arms; it has a different conformation from HJ DNA in complex with RuvA. In the full resolvosome a probable DNA-RuvA(4)-RuvB(12)-RuvC(2) complex forms which resolves the HJ. Mg(2+) serves as cofactor.

The protein localises to the cytoplasm. It carries out the reaction Endonucleolytic cleavage at a junction such as a reciprocal single-stranded crossover between two homologous DNA duplexes (Holliday junction).. In terms of biological role, the RuvA-RuvB-RuvC complex processes Holliday junction (HJ) DNA during genetic recombination and DNA repair. Endonuclease that resolves HJ intermediates. Cleaves cruciform DNA by making single-stranded nicks across the HJ at symmetrical positions within the homologous arms, yielding a 5'-phosphate and a 3'-hydroxyl group; requires a central core of homology in the junction. The consensus cleavage sequence is 5'-(A/T)TT(C/G)-3'. Cleavage occurs on the 3'-side of the TT dinucleotide at the point of strand exchange. HJ branch migration catalyzed by RuvA-RuvB allows RuvC to scan DNA until it finds its consensus sequence, where it cleaves and resolves the cruciform DNA. This Shewanella amazonensis (strain ATCC BAA-1098 / SB2B) protein is Crossover junction endodeoxyribonuclease RuvC.